A 180-amino-acid polypeptide reads, in one-letter code: MYKLIKARSIVRIPPNEFGKPLNEIALNELRQQYQEKILKDLGLVLAILNVKTSEEGMLVFGDGATYHEVEFDMITYVPVVQEVVEGEVLQVDNYGVFVNLGPMDGLVHISQITDDTLKYDNVRGIIFGEKSKKVIQKGDKVRARVISVASTVTGRLPRIALTMRQPYLGKLEWITQAKK.

An S1 motif domain is found at 82–165 (QEVVEGEVLQ…RLPRIALTMR (84 aa)).

This sequence belongs to the eukaryotic RPB7/RPC8 RNA polymerase subunit family. As to quaternary structure, part of the 13-subunit RNA polymerase complex. Forms a stalk with Rpo4 that extends from the main structure.

The protein resides in the cytoplasm. The enzyme catalyses RNA(n) + a ribonucleoside 5'-triphosphate = RNA(n+1) + diphosphate. In terms of biological role, DNA-dependent RNA polymerase (RNAP) catalyzes the transcription of DNA into RNA using the four ribonucleoside triphosphates as substrates. The highly mobile Rpo4/Rpo7 heterodimer is conditionally required for transcription initiation. The protein is DNA-directed RNA polymerase subunit Rpo7 of Saccharolobus shibatae (strain ATCC 51178 / DSM 5389 / JCM 8931 / NBRC 15437 / B12) (Sulfolobus shibatae).